The chain runs to 157 residues: uncharacterized protein (157 aa).

Residues 9–146 (LLINYKTLDE…GDFYVWHPET (138 aa)) form the N-acetyltransferase domain.

This is an uncharacterized protein from Bacillus cereus (strain ATCC 10987 / NRS 248).